The primary structure comprises 191 residues: GDP-mannose pyrophosphatase (191 aa).

GDP-alpha-D-mannose contacts are provided by residues tyrosine 17, 38–40 (KRE), arginine 67, and 85–87 (AGL). The Nudix hydrolase domain occupies 43–180 (DRGNGATILL…EIRDGKTVLL (138 aa)). Positions 85, 100, and 104 each coordinate Mg(2+). Positions 86-106 (GLLDNDEPEVCIRKEAIEETG) match the Nudix box motif. GDP-alpha-D-mannose contacts are provided by residues glutamate 104, glutamate 127, 150–151 (DE), and lysine 176. Glutamate 151 is a Mg(2+) binding site.

The protein belongs to the Nudix hydrolase family. NudK subfamily. In terms of assembly, homodimer. Requires Mg(2+) as cofactor.

It catalyses the reaction GDP-alpha-D-mannose + H2O = alpha-D-mannose 1-phosphate + GMP + 2 H(+). Functionally, nucleoside diphosphate sugar hydrolase that hydrolyzes GDP-mannose as its preferred substrate, yielding GMP and mannose-1-phosphate. The chain is GDP-mannose pyrophosphatase (nudK) from Escherichia coli (strain K12 / DH10B).